A 594-amino-acid chain; its full sequence is DNA polymerase epsilon subunit B (594 aa).

It belongs to the DNA polymerase epsilon subunit B family. Heterotetramer. Consists of four subunits: pol2, dpb2, dpb3 and dpb4. Interacts with dpb3.

Its subcellular location is the nucleus. As accessory component of the DNA polymerase epsilon (DNA polymerase II) participates in chromosomal DNA replication. In Schizosaccharomyces pombe (strain 972 / ATCC 24843) (Fission yeast), this protein is DNA polymerase epsilon subunit B (dpb2).